A 153-amino-acid polypeptide reads, in one-letter code: Ribonuclease H (153 aa).

The RNase H type-1 domain maps to 1–142 (MLKTIKIFSD…CDHLARESAK (142 aa)). Positions 10, 48, 70, and 134 each coordinate Mg(2+).

It belongs to the RNase H family. In terms of assembly, monomer. Requires Mg(2+) as cofactor.

The protein resides in the cytoplasm. The enzyme catalyses Endonucleolytic cleavage to 5'-phosphomonoester.. Functionally, endonuclease that specifically degrades the RNA of RNA-DNA hybrids. This is Ribonuclease H from Buchnera aphidicola subsp. Baizongia pistaciae (strain Bp).